Here is a 720-residue protein sequence, read N- to C-terminus: Asp/Glu-specific dipeptidyl-peptidase (720 aa).

A signal peptide spans 1-21 (MKKRLLLPLFAALCLSQIAHA). Residues cysteine 69 and cysteine 86 are joined by a disulfide bond. Residues histidine 85, aspartate 227, and serine 655 each act as charge relay system in the active site.

Belongs to the peptidase S46 family. Homodimer.

Its subcellular location is the cell surface. Its activity is regulated as follows. Enzyme activity is completely blocked by diisopropyl-fluorophosphates, moderately by phenylmethylsulfonyl fluoride (PMSF) and 4-(2-methyl)benzenesulfonyl fluoride, and slightly by pepstatin in vitro. In terms of biological role, catalyzes the removal of dipeptides from the N-terminus of oligopeptides. Shows a strict specificity for acidic residues (Asp or Glu) in the P1 position, and has a hydrophobic residue preference at the P2 position. Preferentially cleaves the synthetic substrate Leu-Asp-methylcoumaryl-7-amide (Leu-Asp-MCA) as compared to Leu-Glu-MCA. Is involved in amino acid metabolism and bacterial growth of asaccharolytic P.gingivalis, that utilizes amino acids from extracellular proteinaceous nutrients as energy and carbon sources. The chain is Asp/Glu-specific dipeptidyl-peptidase from Porphyromonas gingivalis (strain ATCC 33277 / DSM 20709 / CIP 103683 / JCM 12257 / NCTC 11834 / 2561).